The sequence spans 959 residues: Ataxin-2 homolog (959 aa).

A Sm domain is found at 13-92; sequence DVLSAINDMI…IVDFAYVTQE (80 aa). 5 disordered regions span residues 203–378, 392–484, 501–528, 697–831, and 867–959; these read AREI…GSRV, TAPK…SVIT, PRVA…HPAM, PPQG…QHIQ, and PMQQ…QSPP. Residues 226-235 show a composition bias toward basic and acidic residues; it reads DLDKITRQED. Positions 246-260 are enriched in low complexity; that stretch reads NNSFNQQQQQRRNPN. A compositionally biased stretch (basic and acidic residues) spans 270-281; sequence RRAEGLRGDRRN. Low complexity predominate over residues 282 to 313; the sequence is SGSSSANNSRYGAPAAAQQNYSQNQQQQQGQK. 2 stretches are compositionally biased toward polar residues: residues 341 to 356 and 473 to 484; these read RQQQ…NNNV and VSVTSENDSVIT. 3 stretches are compositionally biased toward low complexity: residues 504 to 528, 697 to 707, and 715 to 725; these read APAT…HPAM, PPQGQQQQPRY, and QQQQQQPQQQQ. Composition is skewed to polar residues over residues 726 to 742 and 756 to 765; these read FSGE…SQPT and APQNGNMQAE. Low complexity predominate over residues 766 to 788; sequence SSSNASHSGSTSSQSGQRSGSPP. A compositionally biased stretch (pro residues) spans 789-798; sequence GAVPPPPPPQ. Low complexity-rich tracts occupy residues 822–831, 867–876, and 902–911; these read MMQQQQQHIQ, PMQQNQHPQQ, and QQQQQQQQQQ. The segment covering 912-922 has biased composition (polar residues); the sequence is MHRQNSLPQQF. Residues 923–935 show a composition bias toward low complexity; that stretch reads QGNQGVNPSGQQS. The span at 948 to 959 shows a compositional bias: polar residues; it reads TPRDQQHSQSPP.

It belongs to the ataxin-2 family. In terms of assembly, interacts (via C-terminus) with szy-20 (via C-terminus); the interaction is RNA independent. Interacts with pab-1. Interacts with gdi-1. As to expression, expressed in the central nervous system, dorsal and ventral nerve cord, intestinal lining and body-wall muscle. Expressed in the gonad.

The protein localises to the cytoplasm. The protein resides in the nucleus. Its function is as follows. Probable RNA-binding protein that negatively regulates the translation of targets. Functions with RNA-binding protein szy-20 to ensure embryonic cell division, and to this end, plays a role in the regulation of centrosome assembly, position and size, and in astral microtubule outgrowth and nucleation. Required for gonad development, germ cell proliferation and for the production of oocytes. Regulates whole body growth and fat accumulation in response to food availability, and this may be through the mTOR pathway, upstream of daf-15 and rheb-1. This Caenorhabditis elegans protein is Ataxin-2 homolog.